The sequence spans 264 residues: Phosphatidylglycerol--prolipoprotein diacylglyceryl transferase (264 aa).

A run of 3 helical transmembrane segments spans residues 17-37 (LAIHWYGLTYLVAFGLFLWLA), 59-79 (LLFYGVLGVIIGGRLGYVLFY), and 95-115 (WKGGMAFHGGLLGVIGAMALF). Residue R142 coordinates a 1,2-diacyl-sn-glycero-3-phospho-(1'-sn-glycerol). The next 2 membrane-spanning stretches (helical) occupy residues 205–225 (GQVSGAFLVGYGVLRFIAEYF) and 241–261 (MGQWLCVPMVAAGVALWVWAG).

This sequence belongs to the Lgt family.

The protein localises to the cell inner membrane. The enzyme catalyses L-cysteinyl-[prolipoprotein] + a 1,2-diacyl-sn-glycero-3-phospho-(1'-sn-glycerol) = an S-1,2-diacyl-sn-glyceryl-L-cysteinyl-[prolipoprotein] + sn-glycerol 1-phosphate + H(+). It functions in the pathway protein modification; lipoprotein biosynthesis (diacylglyceryl transfer). Functionally, catalyzes the transfer of the diacylglyceryl group from phosphatidylglycerol to the sulfhydryl group of the N-terminal cysteine of a prolipoprotein, the first step in the formation of mature lipoproteins. The chain is Phosphatidylglycerol--prolipoprotein diacylglyceryl transferase from Methylibium petroleiphilum (strain ATCC BAA-1232 / LMG 22953 / PM1).